We begin with the raw amino-acid sequence, 141 residues long: Cystatin (141 aa).

The signal sequence occupies residues methionine 1–methionine 26. Residues glycine 29–tryptophan 129 form the Cystatin domain. The short motif at glutamine 73–glycine 77 is the Secondary area of contact element. Intrachain disulfides connect cysteine 91/cysteine 107 and cysteine 120/cysteine 140.

It belongs to the cystatin family. In terms of tissue distribution, expressed at a low level by the venom gland (at protein level).

The protein resides in the secreted. Inhibits various C1 cysteine proteases including cathepsin L, papain and cathepsin B. This protein has no toxic activity and its function in the venom is unknown. It may play a role as a housekeeping or regulatory protein. The sequence is that of Cystatin from Hoplocephalus stephensii (Stephens's banded snake).